Reading from the N-terminus, the 544-residue chain is CTP synthase (544 aa).

The interval 1–265 (MTKFIFVTGG…DNIITEQLQL (265 aa)) is amidoligase domain. Ser13 lines the CTP pocket. UTP is bound at residue Ser13. Residues 14–19 (SLGKGI) and Asp71 contribute to the ATP site. Residues Asp71 and Glu139 each coordinate Mg(2+). CTP is bound by residues 146–148 (DIE), 186–191 (KTKPTQ), and Lys222. UTP-binding positions include 186–191 (KTKPTQ) and Lys222. The region spanning 290-544 (KIAMVGKYVD…VKAALNNKKA (255 aa)) is the Glutamine amidotransferase type-1 domain. Gly353 serves as a coordination point for L-glutamine. Residue Cys380 is the Nucleophile; for glutamine hydrolysis of the active site. Residues 381–384 (LGMQ), Glu404, and Arg471 each bind L-glutamine. Residues His517 and Glu519 contribute to the active site.

It belongs to the CTP synthase family. In terms of assembly, homotetramer.

The catalysed reaction is UTP + L-glutamine + ATP + H2O = CTP + L-glutamate + ADP + phosphate + 2 H(+). It catalyses the reaction L-glutamine + H2O = L-glutamate + NH4(+). It carries out the reaction UTP + NH4(+) + ATP = CTP + ADP + phosphate + 2 H(+). It functions in the pathway pyrimidine metabolism; CTP biosynthesis via de novo pathway; CTP from UDP: step 2/2. With respect to regulation, allosterically activated by GTP, when glutamine is the substrate; GTP has no effect on the reaction when ammonia is the substrate. The allosteric effector GTP functions by stabilizing the protein conformation that binds the tetrahedral intermediate(s) formed during glutamine hydrolysis. Inhibited by the product CTP, via allosteric rather than competitive inhibition. Its function is as follows. Catalyzes the ATP-dependent amination of UTP to CTP with either L-glutamine or ammonia as the source of nitrogen. Regulates intracellular CTP levels through interactions with the four ribonucleotide triphosphates. This chain is CTP synthase, found in Neisseria meningitidis serogroup A / serotype 4A (strain DSM 15465 / Z2491).